Here is a 187-residue protein sequence, read N- to C-terminus: MARSTARKRALNTLYEADEKNQDILSLLDERIAHPGAQTPLPDYAIEIVKGVAEHRRQIDMTLDEHSTGWKVRRMGVVDRNILRIAAWEILFNDDVPDKVAIDEALALAKTLCDDDSPAFIHGLLSAVCTAKNAAPAPESVAEEADEESSDSDAAASDPTDEGDVSDSSGASDEPAAPSAEIQPTVD.

Positions 135 to 187 are disordered; the sequence is APAPESVAEEADEESSDSDAAASDPTDEGDVSDSSGASDEPAAPSAEIQPTVD. A compositionally biased stretch (acidic residues) spans 141-151; the sequence is VAEEADEESSD.

It belongs to the NusB family.

Involved in transcription antitermination. Required for transcription of ribosomal RNA (rRNA) genes. Binds specifically to the boxA antiterminator sequence of the ribosomal RNA (rrn) operons. The chain is Transcription antitermination protein NusB from Bifidobacterium longum subsp. infantis (strain ATCC 15697 / DSM 20088 / JCM 1222 / NCTC 11817 / S12).